The sequence spans 471 residues: Glutamate--tRNA ligase (471 aa).

The 'HIGH' region signature appears at 9-19 (PSPTGFLHVGG). C98, C100, C125, and D127 together coordinate Zn(2+). The 'KMSKS' region signature appears at 237 to 241 (KLSKR). K240 contacts ATP.

It belongs to the class-I aminoacyl-tRNA synthetase family. Glutamate--tRNA ligase type 1 subfamily. As to quaternary structure, monomer. Zn(2+) serves as cofactor.

The protein resides in the cytoplasm. It carries out the reaction tRNA(Glu) + L-glutamate + ATP = L-glutamyl-tRNA(Glu) + AMP + diphosphate. Catalyzes the attachment of glutamate to tRNA(Glu) in a two-step reaction: glutamate is first activated by ATP to form Glu-AMP and then transferred to the acceptor end of tRNA(Glu). The chain is Glutamate--tRNA ligase from Aeromonas salmonicida (strain A449).